The following is a 370-amino-acid chain: D-aspartate oxidase (370 aa).

FAD is bound by residues Ile15, Ala49, Ser50, Gly54, Val166, Arg317, Gly346, and Gln348. The Microbody targeting signal signature appears at 368–370; it reads ARL.

This sequence belongs to the DAMOX/DASOX family. In terms of assembly, homotetramer. FAD is required as a cofactor.

It localises to the peroxisome matrix. It catalyses the reaction D-aspartate + O2 + H2O = oxaloacetate + H2O2 + NH4(+). The catalysed reaction is D-glutamate + O2 + H2O = H2O2 + 2-oxoglutarate + NH4(+). Inhibited by malonate and D-malate. Very mildly inhibited by benzoate, ethylenediaminetetraacetic acid (EDTA), crotonate and anthranilate. May be very mildly inhibited by meso-tartrate. Its function is as follows. Selectively catalyzes the oxidative deamination of acidic amino acids. Protects the organism from the toxicity of D-amino acids. Enables the organism to utilize D-amino acids as a source of nutrients. Enables the organism to utilize D-aspartate as a source of nitrogen and carbon. The protein is D-aspartate oxidase of Vanrija humicola (Yeast).